The primary structure comprises 141 residues: Nucleoside diphosphate kinase (141 aa).

Positions 11, 59, 87, 93, 104, and 114 each coordinate ATP. His117 serves as the catalytic Pros-phosphohistidine intermediate.

It belongs to the NDK family. Homotetramer. It depends on Mg(2+) as a cofactor.

The protein resides in the cytoplasm. It carries out the reaction a 2'-deoxyribonucleoside 5'-diphosphate + ATP = a 2'-deoxyribonucleoside 5'-triphosphate + ADP. It catalyses the reaction a ribonucleoside 5'-diphosphate + ATP = a ribonucleoside 5'-triphosphate + ADP. In terms of biological role, major role in the synthesis of nucleoside triphosphates other than ATP. The ATP gamma phosphate is transferred to the NDP beta phosphate via a ping-pong mechanism, using a phosphorylated active-site intermediate. In Stenotrophomonas maltophilia (strain R551-3), this protein is Nucleoside diphosphate kinase.